A 439-amino-acid chain; its full sequence is Adenylosuccinate synthetase (439 aa).

GTP contacts are provided by residues 14 to 20 and 42 to 44; these read GDEGKGK and GHT. The active-site Proton acceptor is Asp-15. Mg(2+) is bound by residues Asp-15 and Gly-42. IMP is bound by residues 15–18, 40–43, Thr-130, Arg-144, Gln-225, Thr-240, and Arg-304; these read DEGK and NAGH. The active-site Proton donor is His-43. A substrate-binding site is contributed by 300-306; it reads TTTGRRR. GTP contacts are provided by residues Arg-306, 332–334, and 414–416; these read KLD and SLG.

Belongs to the adenylosuccinate synthetase family. In terms of assembly, homodimer. Mg(2+) is required as a cofactor.

The protein resides in the cytoplasm. It carries out the reaction IMP + L-aspartate + GTP = N(6)-(1,2-dicarboxyethyl)-AMP + GDP + phosphate + 2 H(+). Its pathway is purine metabolism; AMP biosynthesis via de novo pathway; AMP from IMP: step 1/2. Functionally, plays an important role in the de novo pathway of purine nucleotide biosynthesis. Catalyzes the first committed step in the biosynthesis of AMP from IMP. The protein is Adenylosuccinate synthetase of Prochlorococcus marinus (strain MIT 9303).